The primary structure comprises 430 residues: Glutamate-1-semialdehyde 2,1-aminomutase (430 aa).

Position 267 is an N6-(pyridoxal phosphate)lysine (Lys267).

Belongs to the class-III pyridoxal-phosphate-dependent aminotransferase family. HemL subfamily. In terms of assembly, homodimer. Pyridoxal 5'-phosphate serves as cofactor.

It localises to the cytoplasm. The catalysed reaction is (S)-4-amino-5-oxopentanoate = 5-aminolevulinate. It functions in the pathway porphyrin-containing compound metabolism; protoporphyrin-IX biosynthesis; 5-aminolevulinate from L-glutamyl-tRNA(Glu): step 2/2. The sequence is that of Glutamate-1-semialdehyde 2,1-aminomutase from Anaeromyxobacter sp. (strain K).